Reading from the N-terminus, the 300-residue chain is Cholesterol 25-hydroxylase-like protein (300 aa).

An N-linked (GlcNAc...) asparagine glycan is attached at N9. 3 consecutive transmembrane segments (helical) span residues 54 to 73, 95 to 115, and 130 to 152; these read YTWVAVFTFIDVFLCNVPFF, LQGWNQLLWIYPMALVQLIWV, and MLSQLAIFFLAFDFTYFWFHYIN. The Fatty acid hydroxylase domain maps to 135-266; that stretch reads AIFFLAFDFT…WFNYLDRLMG (132 aa). The short motif at 148–152 is the Histidine box-1 element; it reads FHYIN. Residues 163 to 167 carry the Histidine box-2 motif; it reads HSVHH. Residues 192-212 form a helical membrane-spanning segment; it reads ITTIPWIFPTHCLTYWIWFFI. The Histidine box-3 signature appears at 242-248; sequence AHDMHHL.

Belongs to the sterol desaturase family. Fe cation is required as a cofactor.

It is found in the membrane. In terms of biological role, probable sterol desaturase. The protein is Cholesterol 25-hydroxylase-like protein of Caenorhabditis elegans.